A 369-amino-acid polypeptide reads, in one-letter code: MKYKRIVFKVGTSSLTNEDGSLSRSKVKDITQQLAMLHEAGHELILVSSGAIAAGFGALGFKKRPTKIADKQASAAVGQGLLLEEYTTNLLLRQIVSAQILLTQDDFVDKRRYKNAHQALSVLLNRGAIPIINENDSVVIDELKVGDNDTLSAQVAAMVQADLLVFLTDVDGLYTGNPNSDPRAKRLERIETINCEIIDMAGGAGSSNGTGGMLTKIKAATIATESGVPVYICSSLKSDSMIEAAEETEDGSYFVAQEKGLRTQKQWLAFYAQSQGSIWVDKGAAEALSQHGKSLLLSGIVEAEGVFSYGDIVTVFDKESGKSLGKGRVQFGASALEDMLRSQKAKGVLIYRDDWISITPEIQLLFTEF.

ATP is bound at residue Lys9. Substrate-binding residues include Ser49, Asp136, and Asn148. ATP contacts are provided by residues 168–169 (TD) and 210–216 (TGGMLTK). In terms of domain architecture, PUA spans 275-355 (QGSIWVDKGA…KGVLIYRDDW (81 aa)).

This sequence belongs to the glutamate 5-kinase family.

It localises to the cytoplasm. It catalyses the reaction L-glutamate + ATP = L-glutamyl 5-phosphate + ADP. It functions in the pathway amino-acid biosynthesis; L-proline biosynthesis; L-glutamate 5-semialdehyde from L-glutamate: step 1/2. Catalyzes the transfer of a phosphate group to glutamate to form L-glutamate 5-phosphate. The chain is Glutamate 5-kinase from Streptococcus pneumoniae (strain ATCC 700669 / Spain 23F-1).